Reading from the N-terminus, the 188-residue chain is Phosphoribosylglycinamide formyltransferase (188 aa).

Residue 12 to 14 (GSN) coordinates N(1)-(5-phospho-beta-D-ribosyl)glycinamide. (6R)-10-formyltetrahydrofolate contacts are provided by residues Lys66, 91-94 (MRLI), and Asn108. His110 (proton donor) is an active-site residue.

It belongs to the GART family.

It carries out the reaction N(1)-(5-phospho-beta-D-ribosyl)glycinamide + (6R)-10-formyltetrahydrofolate = N(2)-formyl-N(1)-(5-phospho-beta-D-ribosyl)glycinamide + (6S)-5,6,7,8-tetrahydrofolate + H(+). It functions in the pathway purine metabolism; IMP biosynthesis via de novo pathway; N(2)-formyl-N(1)-(5-phospho-D-ribosyl)glycinamide from N(1)-(5-phospho-D-ribosyl)glycinamide (10-formyl THF route): step 1/1. Its function is as follows. Catalyzes the transfer of a formyl group from 10-formyltetrahydrofolate to 5-phospho-ribosyl-glycinamide (GAR), producing 5-phospho-ribosyl-N-formylglycinamide (FGAR) and tetrahydrofolate. This is Phosphoribosylglycinamide formyltransferase from Staphylococcus aureus (strain MSSA476).